Consider the following 440-residue polypeptide: Trigger factor (440 aa).

The 94-residue stretch at 160-253 folds into the PPIase FKBP-type domain; that stretch reads KDTVIGDALR…VTEVKRLELP (94 aa).

This sequence belongs to the FKBP-type PPIase family. Tig subfamily.

The protein resides in the cytoplasm. It catalyses the reaction [protein]-peptidylproline (omega=180) = [protein]-peptidylproline (omega=0). In terms of biological role, involved in protein export. Acts as a chaperone by maintaining the newly synthesized protein in an open conformation. Functions as a peptidyl-prolyl cis-trans isomerase. This is Trigger factor from Chlorobium chlorochromatii (strain CaD3).